A 173-amino-acid chain; its full sequence is Transcription factor E (173 aa).

Residues 3-86 (DDPLVKSLLT…SWKFEEQEVI (84 aa)) form the HTH TFE/IIEalpha-type domain.

Belongs to the TFE family. As to quaternary structure, monomer. Interaction with RNA polymerase subunits RpoF and RpoE is necessary for Tfe stimulatory transcription activity. Able to interact with Tbp and RNA polymerase in the absence of DNA promoter. Interacts both with the preinitiation and elongation complexes.

In terms of biological role, transcription factor that plays a role in the activation of archaeal genes transcribed by RNA polymerase. Facilitates transcription initiation by enhancing TATA-box recognition by TATA-box-binding protein (Tbp), and transcription factor B (Tfb) and RNA polymerase recruitment. Not absolutely required for transcription in vitro, but particularly important in cases where Tbp or Tfb function is not optimal. It dynamically alters the nucleic acid-binding properties of RNA polymerases by stabilizing the initiation complex and destabilizing elongation complexes. Seems to translocate with the RNA polymerase following initiation and acts by binding to the non template strand of the transcription bubble in elongation complexes. The protein is Transcription factor E of Methanobrevibacter smithii (strain ATCC 35061 / DSM 861 / OCM 144 / PS).